Consider the following 572-residue polypeptide: Chaperonin CPN60-like 2, mitochondrial (572 aa).

Residues 1–31 (MYRVLSKLSSSIGSSTSRKLVSGRIISSRNY) constitute a mitochondrion transit peptide.

Belongs to the chaperonin (HSP60) family.

The protein resides in the mitochondrion. Functionally, implicated in mitochondrial protein import and macromolecular assembly. May facilitate the correct folding of imported proteins. May also prevent misfolding and promote the refolding and proper assembly of unfolded polypeptides generated under stress conditions in the mitochondrial matrix. This is Chaperonin CPN60-like 2, mitochondrial from Arabidopsis thaliana (Mouse-ear cress).